Reading from the N-terminus, the 442-residue chain is UPF0489 protein C5orf22 homolog (442 aa).

Residues 175 to 208 (SSAKKPKLALEDSRNTASTNCDSSSEGLEKDTAT) form a disordered region. The segment covering 189 to 200 (NTASTNCDSSSE) has biased composition (polar residues).

It belongs to the UPF0489 family.

The sequence is that of UPF0489 protein C5orf22 homolog from Pongo abelii (Sumatran orangutan).